The chain runs to 344 residues: N-acetyl-gamma-glutamyl-phosphate reductase (344 aa).

Residue Cys148 is part of the active site.

Belongs to the NAGSA dehydrogenase family. Type 1 subfamily.

Its subcellular location is the cytoplasm. It carries out the reaction N-acetyl-L-glutamate 5-semialdehyde + phosphate + NADP(+) = N-acetyl-L-glutamyl 5-phosphate + NADPH + H(+). It functions in the pathway amino-acid biosynthesis; L-arginine biosynthesis; N(2)-acetyl-L-ornithine from L-glutamate: step 3/4. Functionally, catalyzes the NADPH-dependent reduction of N-acetyl-5-glutamyl phosphate to yield N-acetyl-L-glutamate 5-semialdehyde. The chain is N-acetyl-gamma-glutamyl-phosphate reductase from Clostridium botulinum (strain Alaska E43 / Type E3).